Here is a 452-residue protein sequence, read N- to C-terminus: Phosphoglucosamine mutase (452 aa).

The active-site Phosphoserine intermediate is serine 98. Serine 98, aspartate 239, aspartate 241, and aspartate 243 together coordinate Mg(2+). Phosphoserine is present on serine 98.

The protein belongs to the phosphohexose mutase family. Requires Mg(2+) as cofactor. Activated by phosphorylation.

The catalysed reaction is alpha-D-glucosamine 1-phosphate = D-glucosamine 6-phosphate. Functionally, catalyzes the conversion of glucosamine-6-phosphate to glucosamine-1-phosphate. The chain is Phosphoglucosamine mutase from Anaplasma marginale (strain St. Maries).